The sequence spans 333 residues: Eukaryotic translation initiation factor 3 subunit I (333 aa).

WD repeat units lie at residues 8-47 (GHERSITQIKYNREGDLLFTVAKDPIVNVWYSVNGERLGT), 50-91 (GHTG…ALLK), 144-183 (CNDSKITSAVWGPLGECIIAGHESGELNQYSAKSGEVLVN), and 186-225 (EHSRQINDIQLSREMTMFVTASKDNTAKLFDSTTLEHQKT). Position 219 is a phosphothreonine (T219). Position 264 is an N6-acetyllysine (K264). A Glycyl lysine isopeptide (Lys-Gly) (interchain with G-Cter in ubiquitin) cross-link involves residue K282. The stretch at 283-324 (GHFGPINSVAFHPDGKSYSSGGEDGYVRIHYFDPQYFEFEFE) is one WD 5 repeat. The residue at position 308 (Y308) is a Phosphotyrosine.

It belongs to the eIF-3 subunit I family. In terms of assembly, component of the eukaryotic translation initiation factor 3 (eIF-3) complex, which is composed of 13 subunits: EIF3A, EIF3B, EIF3C, EIF3D, EIF3E, EIF3F, EIF3G, EIF3H, EIF3I, EIF3J, EIF3K, EIF3L and EIF3M. The eIF-3 complex appears to include 3 stable modules: module A is composed of EIF3A, EIF3B, EIF3G and EIF3I; module B is composed of EIF3F, EIF3H, and EIF3M; and module C is composed of EIF3C, EIF3D, EIF3E, EIF3K and EIF3L. EIF3C of module C binds EIF3B of module A and EIF3H of module B, thereby linking the three modules. EIF3J is a labile subunit that binds to the eIF-3 complex via EIF3B. The eIF-3 complex interacts with RPS6KB1 under conditions of nutrient depletion. Mitogenic stimulation leads to binding and activation of a complex composed of MTOR and RPTOR, leading to phosphorylation and release of RPS6KB1 and binding of EIF4B to eIF-3. Post-translationally, phosphorylated by TGF-beta type II receptor.

Its subcellular location is the cytoplasm. In terms of biological role, component of the eukaryotic translation initiation factor 3 (eIF-3) complex, which is required for several steps in the initiation of protein synthesis. The eIF-3 complex associates with the 40S ribosome and facilitates the recruitment of eIF-1, eIF-1A, eIF-2:GTP:methionyl-tRNAi and eIF-5 to form the 43S pre-initiation complex (43S PIC). The eIF-3 complex stimulates mRNA recruitment to the 43S PIC and scanning of the mRNA for AUG recognition. The eIF-3 complex is also required for disassembly and recycling of post-termination ribosomal complexes and subsequently prevents premature joining of the 40S and 60S ribosomal subunits prior to initiation. The eIF-3 complex specifically targets and initiates translation of a subset of mRNAs involved in cell proliferation, including cell cycling, differentiation and apoptosis, and uses different modes of RNA stem-loop binding to exert either translational activation or repression. The polypeptide is Eukaryotic translation initiation factor 3 subunit I (Oryctolagus cuniculus (Rabbit)).